We begin with the raw amino-acid sequence, 544 residues long: Propane 2-monooxygenase, hydroxylase component large subunit (544 aa).

Residues glutamate 97, glutamate 127, histidine 130, glutamate 192, glutamate 226, and histidine 229 each coordinate Fe cation.

It belongs to the TmoA/XamoA family. The propane 2-monooxygenase multicomponent enzyme system is composed of an electron transfer component and a monooxygenase component interacting with the effector protein PrmD. The electron transfer component is composed of a reductase (PrmB), and the monooxygenase component is formed by a large subunit (PrmA) and a small subunit (PrmC). Probably requires the presence of the chaperonin-like protein PrmG to ensure a productive folding, resulting of a soluble PrmA, which leads to the active form of PrmABCD. It depends on Fe(2+) as a cofactor.

The catalysed reaction is propane + NADH + O2 + H(+) = propan-2-ol + NAD(+) + H2O. In terms of biological role, component of the propane 2-monooxygenase multicomponent enzyme system which is involved in the degradation of propane via the O2-dependent hydroxylation of propane. Also able to catalyze the oxidation the water contaminant N-nitrosodimethylamine (NDMA). This is Propane 2-monooxygenase, hydroxylase component large subunit from Rhodococcus jostii (strain RHA1).